Consider the following 509-residue polypeptide: Phosphoprotein (509 aa).

Disordered stretches follow at residues 33-84 (LESW…LGFR), 131-236 (VQAN…DGNS), and 256-281 (PESR…SAKT). Residues 44-65 (GRATPNPDTSEGDHQNINQSCS) are compositionally biased toward polar residues. Positions 146 to 157 (DGSDDSDVDSGP) are enriched in acidic residues. Serine 151 is modified (phosphoserine). Basic and acidic residues predominate over residues 178–187 (RSTDVEKLEG). Residues 221–236 (SRPSAQSIKKGTDGNS) are compositionally biased toward polar residues. The interval 303–376 (SEFEYEDDLF…LSSIMIAIPG (74 aa)) is multimerization. The segment at 459–509 (SSRSVIRSIIKSSKLNIDHKDYLLDLLNDVKGSKDLKEFHKMLTAILAKQP) is interaction with the nucleocapsid (N-RNA).

It belongs to the morbillivirus P protein family. As to quaternary structure, homotetramer. Interacts (via multimerization domain) with polymerase L; this interaction forms the polymerase L-P complex. Interacts (via N-terminus) with N0 (via Ncore); this interaction allows P to chaperon N0 to avoid N polymerization before encapsidation. Interacts (via C-terminus) with N-RNA template; this interaction positions the polymerase on the template for both transcription and replication. Interacts with host ISG15; this interaction disrupts the activity of the N0-P complex. In terms of processing, phosphorylation on serines by host CK2 is necessary for the formation of viral factories.

Its function is as follows. Essential cofactor of the RNA polymerase L that plays a central role in the transcription and replication by forming the polymerase complex with RNA polymerase L and recruiting L to the genomic N-RNA template for RNA synthesis. Also plays a central role in the encapsidation of nascent RNA chains by forming the encapsidation complex with the nucleocapsid protein N (N-P complex). Acts as a chaperone for newly synthesized free N protein, so-called N0, allowing encapsidation of nascent RNA chains during replication. The nucleoprotein protein N prevents excessive phosphorylation of P, which leads to down-regulation of viral transcription/ replication. Participates, together with N, in the formation of viral factories (viroplasms), which are large inclusions in the host cytoplasm where replication takes place. The sequence is that of Phosphoprotein (P/V) from Capra hircus (Goat).